The primary structure comprises 595 residues: Elongation factor 4 (595 aa).

A tr-type G domain is found at 2–184 (SHIRNFSIIA…RLVATIPAPT (183 aa)). GTP-binding positions include 14-19 (DHGKST) and 131-134 (NKMD).

It belongs to the TRAFAC class translation factor GTPase superfamily. Classic translation factor GTPase family. LepA subfamily.

The protein resides in the cell inner membrane. It catalyses the reaction GTP + H2O = GDP + phosphate + H(+). Required for accurate and efficient protein synthesis under certain stress conditions. May act as a fidelity factor of the translation reaction, by catalyzing a one-codon backward translocation of tRNAs on improperly translocated ribosomes. Back-translocation proceeds from a post-translocation (POST) complex to a pre-translocation (PRE) complex, thus giving elongation factor G a second chance to translocate the tRNAs correctly. Binds to ribosomes in a GTP-dependent manner. The sequence is that of Elongation factor 4 from Pseudomonas savastanoi pv. phaseolicola (strain 1448A / Race 6) (Pseudomonas syringae pv. phaseolicola (strain 1448A / Race 6)).